Here is a 324-residue protein sequence, read N- to C-terminus: UDP-N-acetylenolpyruvoylglucosamine reductase (324 aa).

The FAD-binding PCMH-type domain occupies Phe36–Glu203. Arg183 is a catalytic residue. Ser232 serves as the catalytic Proton donor. Glu302 is an active-site residue.

Belongs to the MurB family. It depends on FAD as a cofactor.

The protein resides in the cytoplasm. The enzyme catalyses UDP-N-acetyl-alpha-D-muramate + NADP(+) = UDP-N-acetyl-3-O-(1-carboxyvinyl)-alpha-D-glucosamine + NADPH + H(+). The protein operates within cell wall biogenesis; peptidoglycan biosynthesis. Its function is as follows. Cell wall formation. This is UDP-N-acetylenolpyruvoylglucosamine reductase from Sinorhizobium fredii (strain NBRC 101917 / NGR234).